The primary structure comprises 114 residues: Anti-adapter protein IraM (114 aa).

The protein belongs to the IraM/RssC family.

It is found in the cytoplasm. In terms of biological role, involved in the stabilization of the sigma stress factor RpoS. The protein is Anti-adapter protein IraM of Citrobacter koseri (strain ATCC BAA-895 / CDC 4225-83 / SGSC4696).